Reading from the N-terminus, the 96-residue chain is Muconolactone Delta-isomerase (96 aa).

This sequence belongs to the muconolactone Delta-isomerase family. In terms of assembly, homodecamer.

It carries out the reaction (S)-muconolactone = (4,5-dihydro-5-oxofuran-2-yl)-acetate. Its pathway is aromatic compound metabolism; beta-ketoadipate pathway; 5-oxo-4,5-dihydro-2-furylacetate from catechol: step 3/3. The sequence is that of Muconolactone Delta-isomerase (catC) from Acinetobacter baylyi (strain ATCC 33305 / BD413 / ADP1).